Consider the following 138-residue polypeptide: Basic phospholipase A2 B (138 aa).

A signal peptide spans 1–16; the sequence is MRALWIVAVLLLGVEG. 7 cysteine pairs are disulfide-bonded: Cys-42-Cys-131, Cys-44-Cys-60, Cys-59-Cys-111, Cys-65-Cys-138, Cys-66-Cys-104, Cys-73-Cys-97, and Cys-91-Cys-102. Ca(2+)-binding residues include Tyr-43, Gly-45, and Gly-47. His-63 is an active-site residue. Asp-64 lines the Ca(2+) pocket. Residue Asp-105 is part of the active site.

This sequence belongs to the phospholipase A2 family. Group II subfamily. D49 sub-subfamily. Ca(2+) is required as a cofactor. Expressed by the venom gland.

It localises to the secreted. The catalysed reaction is a 1,2-diacyl-sn-glycero-3-phosphocholine + H2O = a 1-acyl-sn-glycero-3-phosphocholine + a fatty acid + H(+). Functionally, snake venom phospholipase A2 (PLA2) that shows potent hemolytic activity, and exhibits medium anticoagulant effects by binding to factor Xa (F10) and inhibiting the prothrombinase activity (IC(50) is 90 nM). It is one of the few phospholipases A2 capable of hydrolyzing the phospholipids of E.coli membranes in the presence of a bactericidal/permeability-increasing protein (BPI) of neutrophils. PLA2 catalyzes the calcium-dependent hydrolysis of the 2-acyl groups in 3-sn-phosphoglycerides. The polypeptide is Basic phospholipase A2 B (Gloydius halys (Chinese water mocassin)).